The following is a 222-amino-acid chain: Triosephosphate isomerase (222 aa).

Residue 9 to 11 (NYK) coordinates substrate. Histidine 93 functions as the Electrophile in the catalytic mechanism. The active-site Proton acceptor is glutamate 141. Substrate-binding positions include isoleucine 146, glycine 181, and 202 to 203 (AS).

This sequence belongs to the triosephosphate isomerase family. As to quaternary structure, homotetramer; dimer of dimers.

The protein resides in the cytoplasm. The enzyme catalyses D-glyceraldehyde 3-phosphate = dihydroxyacetone phosphate. It functions in the pathway carbohydrate biosynthesis; gluconeogenesis. The protein operates within carbohydrate degradation; glycolysis; D-glyceraldehyde 3-phosphate from glycerone phosphate: step 1/1. Functionally, involved in the gluconeogenesis. Catalyzes stereospecifically the conversion of dihydroxyacetone phosphate (DHAP) to D-glyceraldehyde-3-phosphate (G3P). The sequence is that of Triosephosphate isomerase from Methanosarcina mazei (strain ATCC BAA-159 / DSM 3647 / Goe1 / Go1 / JCM 11833 / OCM 88) (Methanosarcina frisia).